The chain runs to 105 residues: MSTKNKKAAGGNGGAPKQTRQQSHDSQDYSSFKTVLFYCMLIVFLPVLTFFVLKGFVLDQFLNISEVKVNIASAVGAVVALHIALGLYIYRAYFGAPGSKGSKTD.

Residues 1 to 26 (MSTKNKKAAGGNGGAPKQTRQQSHDS) are disordered. Residues 1–36 (MSTKNKKAAGGNGGAPKQTRQQSHDSQDYSSFKTVL) lie on the Cytoplasmic side of the membrane. Residues 37–57 (FYCMLIVFLPVLTFFVLKGFV) traverse the membrane as a helical segment. Residues 58–68 (LDQFLNISEVK) are Lumenal-facing. A helical membrane pass occupies residues 69 to 89 (VNIASAVGAVVALHIALGLYI). At 90-105 (YRAYFGAPGSKGSKTD) the chain is on the cytoplasmic side.

The protein belongs to the VMA21 family.

It is found in the endoplasmic reticulum membrane. It localises to the endoplasmic reticulum-Golgi intermediate compartment membrane. Its subcellular location is the cytoplasmic vesicle. The protein localises to the COPII-coated vesicle membrane. Functionally, required for the assembly of the V0 complex of the vacuolar ATPase (V-ATPase) in the endoplasmic reticulum. This Drosophila sechellia (Fruit fly) protein is Vacuolar ATPase assembly integral membrane protein VMA21 homolog.